A 315-amino-acid chain; its full sequence is Olfactory receptor 3A10 (315 aa).

Over Met1–Pro28 the chain is Extracellular. An N-linked (GlcNAc...) asparagine glycan is attached at Asn8. The helical transmembrane segment at Ile29 to Leu49 threads the bilayer. Residues Ala50–Asn68 lie on the Cytoplasmic side of the membrane. A helical membrane pass occupies residues Leu69–Leu89. Residues Ala90–Tyr97 lie on the Extracellular side of the membrane. Residues Ala98 to Leu118 form a helical membrane-spanning segment. Cys100 and Cys192 are oxidised to a cystine. The Cytoplasmic portion of the chain corresponds to Thr119–Gly145. A helical transmembrane segment spans residues Thr146 to Val166. Over Ser167–Gln200 the chain is Extracellular. The helical transmembrane segment at Leu201–Tyr221 threads the bilayer. Residues Ala222–Lys239 lie on the Cytoplasmic side of the membrane. Residues Ala240–Phe260 form a helical membrane-spanning segment. At Ser261–Asp274 the chain is on the extracellular side. Residues Lys275–Leu295 form a helical membrane-spanning segment. Residues Arg296–Val315 are Cytoplasmic-facing.

The protein belongs to the G-protein coupled receptor 1 family.

It localises to the cell membrane. Odorant receptor. The sequence is that of Olfactory receptor 3A10 from Mus musculus (Mouse).